A 212-amino-acid polypeptide reads, in one-letter code: A-kinase-interacting protein 1 (212 aa).

In terms of assembly, interacts with PRKACA and RELA.

It is found in the nucleus. Its function is as follows. Enhances NF-kappa-B transcriptional activity by regulating the nuclear localization of the NF-kappa-B subunit RELA and promoting the phosphorylation of RELA by PRKACA. Regulates the effect of the cAMP-dependent protein kinase signaling pathway on the NF-kappa-B activation cascade. The sequence is that of A-kinase-interacting protein 1 (Akip1) from Mus musculus (Mouse).